We begin with the raw amino-acid sequence, 81 residues long: Probable antimicrobial peptide Con13 (81 aa).

Positions 1–22 are cleaved as a signal peptide; the sequence is MNRKLLLVFLVVAMLVMQPAEA. A propeptide spanning residues 66–81 is cleaved from the precursor; that stretch reads EAGQIPFDEFMDVLYS.

It belongs to the non-disulfide-bridged peptide (NDBP) superfamily. Long chain multifunctional peptide (group 2) family. Expressed by the venom gland.

Its subcellular location is the secreted. It is found in the target cell membrane. Functionally, at high concentrations, acts as a pore former in cellular membranes and causes the leakage of the cells. At submicromolar concentrations, degranulates granulocytes and has a weak hemolytic activity against human erythrocytes. Also strongly inhibits the production of superoxide anions. Has a strong antibacterial activity against Gram-negative bacteria but is less active against Gram-positive bacteria. Also has antifungal activity. This Opisthacanthus cayaporum (South American scorpion) protein is Probable antimicrobial peptide Con13.